Reading from the N-terminus, the 277-residue chain is Large ribosomal subunit protein uL2 (277 aa).

A disordered region spans residues 222–277 (GVAMNPIDHPHGGGEGRTSGGRHPVTPWGKPTKGKKTRTNKSTDKFILLSRHKRKK).

The protein belongs to the universal ribosomal protein uL2 family. As to quaternary structure, part of the 50S ribosomal subunit. Forms a bridge to the 30S subunit in the 70S ribosome.

Its function is as follows. One of the primary rRNA binding proteins. Required for association of the 30S and 50S subunits to form the 70S ribosome, for tRNA binding and peptide bond formation. It has been suggested to have peptidyltransferase activity; this is somewhat controversial. Makes several contacts with the 16S rRNA in the 70S ribosome. This Bradyrhizobium sp. (strain ORS 278) protein is Large ribosomal subunit protein uL2.